Here is a 130-residue protein sequence, read N- to C-terminus: Large ribosomal subunit protein bL19 (130 aa).

The protein belongs to the bacterial ribosomal protein bL19 family.

In terms of biological role, this protein is located at the 30S-50S ribosomal subunit interface and may play a role in the structure and function of the aminoacyl-tRNA binding site. The sequence is that of Large ribosomal subunit protein bL19 from Gluconobacter oxydans (strain 621H) (Gluconobacter suboxydans).